A 370-amino-acid chain; its full sequence is Versatile peroxidase VPS1 (370 aa).

Residues 1-20 form the signal peptide; that stretch reads MAFAKLSAFVLALGATVALG. Residues 21–31 constitute a propeptide that is removed on maturation; the sequence is ESPTHRCLNKR. 4 disulfide bridges follow: C34–C46, C45–C315, C65–C151, and C279–C344. Residues E67 and E71 each coordinate Mn(2+). The active-site Proton acceptor is H78. D79, G97, D99, and S101 together coordinate Ca(2+). N133 carries N-linked (GlcNAc...) asparagine glycosylation. W201 acts as the Tryptophan radical intermediate in catalysis. H206 provides a ligand contact to heme b. Ca(2+) is bound at residue T207. 210–214 is a binding site for heme b; it reads AADHV. D212 is a Mn(2+) binding site. The Ca(2+) site is built by D224, T226, T229, and D231.

It belongs to the peroxidase family. Ligninase subfamily. Heme b serves as cofactor. Ca(2+) is required as a cofactor.

It is found in the secreted. The catalysed reaction is 1-(4-hydroxy-3-methoxyphenyl)-2-(2-methoxyphenoxy)propane-1,3-diol + H2O2 = guaiacol + vanillin + glycolaldehyde + H2O. It catalyses the reaction 2 Mn(2+) + H2O2 + 2 H(+) = 2 Mn(3+) + 2 H2O. Functionally, a versatile ligninolytic peroxidase that combines the substrate specificity characteristics of the two other ligninolytic peroxidases, manganese peroxidase and lignin peroxidase. The polypeptide is Versatile peroxidase VPS1 (vps1) (Pleurotus eryngii (Boletus of the steppes)).